The following is a 426-amino-acid chain: Histidine--tRNA ligase 1 (426 aa).

It belongs to the class-II aminoacyl-tRNA synthetase family. Homodimer.

It is found in the cytoplasm. The catalysed reaction is tRNA(His) + L-histidine + ATP = L-histidyl-tRNA(His) + AMP + diphosphate + H(+). This chain is Histidine--tRNA ligase 1, found in Bacillus cereus (strain ATCC 14579 / DSM 31 / CCUG 7414 / JCM 2152 / NBRC 15305 / NCIMB 9373 / NCTC 2599 / NRRL B-3711).